A 300-amino-acid polypeptide reads, in one-letter code: Fe(3+) dicitrate-binding periplasmic protein FecB (300 aa).

The N-terminal stretch at 1 to 21 is a signal peptide; it reads MLAFIRFLFAGLLLVISHAFA. A Fe/B12 periplasmic-binding domain is found at 39–295; it reads RIVVLELSFA…DTVKIFHHQP (257 aa).

The protein belongs to the bacterial solute-binding protein 8 family. As to quaternary structure, the complex is composed of two ATP-binding proteins (FecE), two transmembrane proteins (FecC and FecD) and a solute-binding protein (FecB). Interacts with FecC and FecD.

It localises to the periplasm. Functionally, part of the ABC transporter complex FecBCDE involved in citrate-dependent Fe(3+) uptake. Binds both iron-free and iron-loaded citrate although it binds iron-loaded citrate with a higher affinity. Binds different forms of Fe(3+)-citrate as well as citrate complexed with various representative Fe(3+)-mimics (Ga(3+), Al(3+), Sc(3+) and In(3+)) and a representative divalent metal ion (Mg(2+)). Can also bind various tricarboxylates in iron-free and iron-loaded form. The sequence is that of Fe(3+) dicitrate-binding periplasmic protein FecB from Escherichia coli (strain K12).